Here is a 448-residue protein sequence, read N- to C-terminus: Asparagine--tRNA ligase (448 aa).

It belongs to the class-II aminoacyl-tRNA synthetase family. As to quaternary structure, homodimer.

The protein resides in the cytoplasm. The enzyme catalyses tRNA(Asn) + L-asparagine + ATP = L-asparaginyl-tRNA(Asn) + AMP + diphosphate + H(+). This is Asparagine--tRNA ligase from Streptococcus agalactiae serotype Ia (strain ATCC 27591 / A909 / CDC SS700).